Reading from the N-terminus, the 160-residue chain is SsrA-binding protein (160 aa).

It belongs to the SmpB family.

Its subcellular location is the cytoplasm. In terms of biological role, required for rescue of stalled ribosomes mediated by trans-translation. Binds to transfer-messenger RNA (tmRNA), required for stable association of tmRNA with ribosomes. tmRNA and SmpB together mimic tRNA shape, replacing the anticodon stem-loop with SmpB. tmRNA is encoded by the ssrA gene; the 2 termini fold to resemble tRNA(Ala) and it encodes a 'tag peptide', a short internal open reading frame. During trans-translation Ala-aminoacylated tmRNA acts like a tRNA, entering the A-site of stalled ribosomes, displacing the stalled mRNA. The ribosome then switches to translate the ORF on the tmRNA; the nascent peptide is terminated with the 'tag peptide' encoded by the tmRNA and targeted for degradation. The ribosome is freed to recommence translation, which seems to be the essential function of trans-translation. The sequence is that of SsrA-binding protein from Mycobacterium leprae (strain Br4923).